Here is a 343-residue protein sequence, read N- to C-terminus: ATP-dependent 6-phosphofructokinase (343 aa).

ATP-binding positions include Gly10 and 103 to 106 (GEGT). Mg(2+) is bound at residue Glu104. Substrate is bound by residues 126–128 (TID), Arg163, 170–172 (MGR), Glu223, Arg267, and 273–276 (HVQR). Catalysis depends on Asp128, which acts as the Proton acceptor.

This sequence belongs to the phosphofructokinase type A (PFKA) family. Mixed-substrate PFK group III subfamily. In terms of assembly, homodimer or homotetramer. The cofactor is Mg(2+).

The protein localises to the cytoplasm. It carries out the reaction beta-D-fructose 6-phosphate + ATP = beta-D-fructose 1,6-bisphosphate + ADP + H(+). The protein operates within carbohydrate degradation; glycolysis; D-glyceraldehyde 3-phosphate and glycerone phosphate from D-glucose: step 3/4. Functionally, catalyzes the phosphorylation of D-fructose 6-phosphate to fructose 1,6-bisphosphate by ATP, the first committing step of glycolysis. This chain is ATP-dependent 6-phosphofructokinase, found in Mycobacterium leprae (strain TN).